A 230-amino-acid polypeptide reads, in one-letter code: MSRLPSLSRPCLAIACSALLGGCVAAGDVRPFAEMAPIVPVVAPVAQPTAGAIYAAGPGLNLYGDRRARDVGDLLTVNLVESTTASSTANTSISKKDATTMAAPTLLGAPLTVGGLNVLENSTSGDRSFAGKGNTAQSNRMQGSVTVTVMQRLPNGNLVIQGQKNLRLTQGDELVQVQGIVRAADIAPDNTVPSSKVADARIAYGGRGAIAQSNAMGWLSRFFNSRLSPY.

Residues 1 to 15 (MSRLPSLSRPCLAIA) form the signal peptide. The N-palmitoyl cysteine moiety is linked to residue Cys16. Cys16 carries S-diacylglycerol cysteine lipidation.

The protein belongs to the FlgH family. As to quaternary structure, the basal body constitutes a major portion of the flagellar organelle and consists of four rings (L,P,S, and M) mounted on a central rod.

The protein resides in the cell outer membrane. It localises to the bacterial flagellum basal body. Functionally, assembles around the rod to form the L-ring and probably protects the motor/basal body from shearing forces during rotation. The polypeptide is Flagellar L-ring protein (Xanthomonas axonopodis pv. citri (strain 306)).